The primary structure comprises 276 residues: Foldase protein PrsA (276 aa).

A signal peptide spans 1–18 (MRKWMIVAAVAAVFGLSA). C19 carries the N-palmitoyl cysteine lipid modification. A lipid anchor (S-diacylglycerol cysteine) is attached at C19. The region spanning 133-223 (KPKIRASHIL…YGYHIIKVTD (91 aa)) is the PpiC domain.

Belongs to the PrsA family.

The protein localises to the cell membrane. The enzyme catalyses [protein]-peptidylproline (omega=180) = [protein]-peptidylproline (omega=0). Its function is as follows. Plays a major role in protein secretion by helping the post-translocational extracellular folding of several secreted proteins. The protein is Foldase protein PrsA of Geobacillus sp. (strain WCH70).